The chain runs to 436 residues: GTPase Der (436 aa).

EngA-type G domains lie at 4–167 (PVVA…PKRG) and 176–351 (IKFC…ENHA). Residues 10–17 (GRPNVGKS), 57–61 (DTGGI), 119–122 (NKID), 182–189 (GRPNVGKS), 229–233 (DTAGM), and 294–297 (NKWD) contribute to the GTP site. The 85-residue stretch at 352 to 436 (MRVQTNVLNE…PIKIIARPRK (85 aa)) folds into the KH-like domain.

The protein belongs to the TRAFAC class TrmE-Era-EngA-EngB-Septin-like GTPase superfamily. EngA (Der) GTPase family. In terms of assembly, associates with the 50S ribosomal subunit.

Functionally, GTPase that plays an essential role in the late steps of ribosome biogenesis. The polypeptide is GTPase Der (Geobacillus sp. (strain WCH70)).